We begin with the raw amino-acid sequence, 947 residues long: DNA polymerase (947 aa).

It belongs to the DNA polymerase type-B family.

It carries out the reaction DNA(n) + a 2'-deoxyribonucleoside 5'-triphosphate = DNA(n+1) + diphosphate. This chain is DNA polymerase, found in Red sea bream iridovirus (RSIV).